The sequence spans 402 residues: F-box/kelch-repeat protein At4g39590 (402 aa).

Over residues methionine 1–asparagine 14 the composition is skewed to low complexity. Residues methionine 1–serine 37 form a disordered region. Positions threonine 27–serine 37 are enriched in polar residues. One can recognise an F-box domain in the interval proline 35–arginine 81. 4 Kelch repeats span residues asparagine 143–glycine 198, lysine 199–alanine 246, lysine 255–tryptophan 300, and glutamine 302–glycine 341.

This chain is F-box/kelch-repeat protein At4g39590, found in Arabidopsis thaliana (Mouse-ear cress).